A 354-amino-acid polypeptide reads, in one-letter code: Fructose-bisphosphate aldolase (354 aa).

Ser50 contacts D-glyceraldehyde 3-phosphate. Asp83 functions as the Proton donor in the catalytic mechanism. His84, Asp105, Glu142, and His198 together coordinate Zn(2+). Gly199 contacts dihydroxyacetone phosphate. Zn(2+) is bound at residue His232. Residues 233–235 (GSS) and 275–278 (NIDT) each bind dihydroxyacetone phosphate.

This sequence belongs to the class II fructose-bisphosphate aldolase family. Zn(2+) is required as a cofactor.

The catalysed reaction is beta-D-fructose 1,6-bisphosphate = D-glyceraldehyde 3-phosphate + dihydroxyacetone phosphate. It functions in the pathway carbohydrate degradation; glycolysis; D-glyceraldehyde 3-phosphate and glycerone phosphate from D-glucose: step 4/4. Catalyzes the aldol condensation of dihydroxyacetone phosphate (DHAP or glycerone-phosphate) with glyceraldehyde 3-phosphate (G3P) to form fructose 1,6-bisphosphate (FBP) in gluconeogenesis and the reverse reaction in glycolysis. This chain is Fructose-bisphosphate aldolase (fba), found in Stutzerimonas stutzeri (Pseudomonas stutzeri).